Consider the following 136-residue polypeptide: Large ribosomal subunit protein uL16c (136 aa).

This sequence belongs to the universal ribosomal protein uL16 family. In terms of assembly, part of the 50S ribosomal subunit.

It is found in the plastid. The protein localises to the chloroplast. This is Large ribosomal subunit protein uL16c from Phaseolus angularis (Azuki bean).